We begin with the raw amino-acid sequence, 304 residues long: Putative S-adenosyl-L-methionine-dependent methyltransferase MAV_1058 (304 aa).

Residues aspartate 128 and 157–158 (DL) contribute to the S-adenosyl-L-methionine site.

Belongs to the UPF0677 family.

In terms of biological role, exhibits S-adenosyl-L-methionine-dependent methyltransferase activity. The polypeptide is Putative S-adenosyl-L-methionine-dependent methyltransferase MAV_1058 (Mycobacterium avium (strain 104)).